The chain runs to 443 residues: Chromosomal replication initiator protein DnaA (443 aa).

The interval 1–75 (MNTQLNEIWQ…AIKQVTFKEY (75 aa)) is domain I, interacts with DnaA modulators. Residues 75 to 105 (YEIAFIVPSQENLNKLTKQTESAGNEDSPLS) are domain II. The tract at residues 106-321 (VLNPKYTFDT…GALNRVIAYS (216 aa)) is domain III, AAA+ region. ATP is bound by residues Gly150, Gly152, Lys153, and Thr154. The tract at residues 322 to 443 (SLTENEITVE…SEIKRNLLGK (122 aa)) is domain IV, binds dsDNA.

Belongs to the DnaA family. Oligomerizes as a right-handed, spiral filament on DNA at oriC.

It localises to the cytoplasm. In terms of biological role, plays an essential role in the initiation and regulation of chromosomal replication. ATP-DnaA binds to the origin of replication (oriC) to initiate formation of the DNA replication initiation complex once per cell cycle. Binds the DnaA box (a 9 base pair repeat at the origin) and separates the double-stranded (ds)DNA. Forms a right-handed helical filament on oriC DNA; dsDNA binds to the exterior of the filament while single-stranded (ss)DNA is stabiized in the filament's interior. The ATP-DnaA-oriC complex binds and stabilizes one strand of the AT-rich DNA unwinding element (DUE), permitting loading of DNA polymerase. After initiation quickly degrades to an ADP-DnaA complex that is not apt for DNA replication. Binds acidic phospholipids. The polypeptide is Chromosomal replication initiator protein DnaA (Acetivibrio thermocellus (strain ATCC 27405 / DSM 1237 / JCM 9322 / NBRC 103400 / NCIMB 10682 / NRRL B-4536 / VPI 7372) (Clostridium thermocellum)).